A 268-amino-acid chain; its full sequence is Hydroxyethylthiazole kinase (268 aa).

Met45 contributes to the substrate binding site. 2 residues coordinate ATP: Arg121 and Thr167. Gly194 provides a ligand contact to substrate.

It belongs to the Thz kinase family. Mg(2+) is required as a cofactor.

The catalysed reaction is 5-(2-hydroxyethyl)-4-methylthiazole + ATP = 4-methyl-5-(2-phosphooxyethyl)-thiazole + ADP + H(+). Its pathway is cofactor biosynthesis; thiamine diphosphate biosynthesis; 4-methyl-5-(2-phosphoethyl)-thiazole from 5-(2-hydroxyethyl)-4-methylthiazole: step 1/1. Catalyzes the phosphorylation of the hydroxyl group of 4-methyl-5-beta-hydroxyethylthiazole (THZ). This is Hydroxyethylthiazole kinase from Bacillus anthracis (strain A0248).